We begin with the raw amino-acid sequence, 338 residues long: mRNA decay activator protein ZFP36L1 (338 aa).

The necessary and sufficient for the association with mRNA decay enzymes and mRNA decay activation stretch occupies residues 1–111 (MTTTLVSATI…QKQPGSGQVN (111 aa)). Residue Ser-54 is modified to Phosphoserine; by MAPKAPK2. The tract at residues 71-113 (LKGEPAPSLSSRDSRFRDRSFSEGGERLLPTQKQPGSGQVNSS) is disordered. The segment covering 82–96 (RDSRFRDRSFSEGGE) has biased composition (basic and acidic residues). Ser-90 is modified (phosphoserine; by PKB/AKT1). Ser-92 is modified (phosphoserine; by PKB/AKT1 and MAPKAPK2). Residues 101–113 (TQKQPGSGQVNSS) are compositionally biased toward polar residues. C3H1-type zinc fingers lie at residues 114 to 142 (RYKT…HGIH) and 152 to 180 (KYKT…HNAE). Positions 185-338 (LAGGRDLSAD…IFSRLSISDD (154 aa)) are necessary for mRNA decay activation. Residue Ser-203 is modified to Phosphoserine; by PKB/AKT1 and MAPKAPK2. Positions 273–338 (SPTTFLFRPM…IFSRLSISDD (66 aa)) are disordered. The span at 305–318 (YLSSSSSSHSGSDS) shows a compositional bias: low complexity. The residue at position 318 (Ser-318) is a Phosphoserine. Ser-334 carries the phosphoserine; by RPS6KA1 modification.

As to quaternary structure, associates with the cytoplasmic CCR4-NOT deadenylase and RNA exosome complexes to trigger ARE-containing mRNA deadenylation and decay processes. Interacts with CNOT1. Interacts (via N-terminus) with CNOT6. Interacts with CNOT7; this interaction is inhibited in response to phorbol 12-myristate 13-acetate (PMA) treatment in a p38 MAPK-dependent manner. Interacts with DCP1A. Interacts (via N-terminus) with DCP2. Interacts (via N-terminus) with EXOSC2. Interacts with XRN1. Interacts (via phosphorylated form) with YWHAB; this interaction occurs in a protein kinase AKT1-dependent manner. Interacts (via phosphorylated form) with YWHAZ; this interaction occurs in a p38 MAPK- and AKT-signaling pathways. In terms of processing, phosphorylated. Phosphorylated by RPS6KA1 at Ser-334 upon phorbol 12-myristate 13-acetate (PMA) treatment; this phosphorylation results in dissociation of the CCR4-NOT deadenylase complex and induces p38 MAPK-mediated stabilization of the low-density lipoprotein receptor LDLR mRNA. Phosphorylated by protein kinase AKT1 at Ser-92 and Ser-203 in response to insulin; these phosphorylations stabilize ZFP36L1, increase the association with 14-3-3 proteins and mediate ARE-containing mRNA stabilization. AKT1-mediated phosphorylation at Ser-92 does not impair ARE-containing RNA-binding. Phosphorylated at Ser-54, Ser-92 and Ser-203 by MAPKAPK2; these phosphorylations increase the association with 14-3-3 proteins and mediate ARE-containing mRNA stabilization in a protein kinase AKT1-independent manner. MAPKAPK2-mediated phosphorylations at Ser-54, Ser-92 and Ser-203 do not impair ARE-containing RNA-binding. Phosphorylations increase the association with 14-3-3 proteins and mediate ARE-containing mRNA stabilization during early adipogenesis in a p38 MAPK- and AKT-dependent manner. Post-translationally, ubiquitinated. Ubiquitination leads to proteasomal degradation, a process inhibited by phosphorylations at Ser-90, Ser-92 and Ser-203. As to expression, expressed in preadipocytes and adipocytes. Expressed in the proximal and distal tubules in the renal cortex (at protein level). Expressed in ovary, heart, kidney, lung, spleen and thymus. Weakly expressed in brain, liver and testis. Expressed in osteoblasts. Expressed in embryonic stem cells (ESCs). Expressed through B lymphocyte development.

Its subcellular location is the nucleus. The protein localises to the cytoplasm. The protein resides in the cytoplasmic granule. It is found in the P-body. Zinc-finger RNA-binding protein that destabilizes several cytoplasmic AU-rich element (ARE)-containing mRNA transcripts by promoting their poly(A) tail removal or deadenylation, and hence provide a mechanism for attenuating protein synthesis. Acts as a 3'-untranslated region (UTR) ARE mRNA-binding adapter protein to communicate signaling events to the mRNA decay machinery. Functions by recruiting the CCR4-NOT deadenylating complex and components of the cytoplasmic RNA decay machinery to the bound ARE-containing mRNAs, and hence promotes ARE-mediated mRNA deadenylation and decay processes. Also induces the degradation of ARE-containing mRNAs even in absence of poly(A) tail. Binds to 3'-UTR ARE of numerous mRNAs. Positively regulates early adipogenesis by promoting ARE-mediated mRNA decay of immediate early genes (IEGs). Promotes ARE-mediated mRNA decay of mineralocorticoid receptor NR3C2 mRNA in response to hypertonic stress. Negatively regulates hematopoietic/erythroid cell differentiation by promoting ARE-mediated mRNA decay of the transcription factor STAT5B mRNA. Positively regulates monocyte/macrophage cell differentiation by promoting ARE-mediated mRNA decay of the cyclin-dependent kinase CDK6 mRNA. Promotes degradation of ARE-containing pluripotency-associated mRNAs in embryonic stem cells (ESCs), such as NANOG, through a fibroblast growth factor (FGF)-induced MAPK-dependent signaling pathway, and hence attenuates ESC self-renewal and positively regulates mesendoderm differentiation. May play a role in mediating pro-apoptotic effects in malignant B-cells by promoting ARE-mediated mRNA decay of BCL2 mRNA. In association with ZFP36L2 maintains quiescence on developing B lymphocytes by promoting ARE-mediated decay of several mRNAs encoding cell cycle regulators that help B cells progress through the cell cycle, and hence ensuring accurate variable-diversity-joining (VDJ) recombination and functional immune cell formation. Together with ZFP36L2 is also necessary for thymocyte development and prevention of T-cell acute lymphoblastic leukemia (T-ALL) transformation by promoting ARE-mediated mRNA decay of the oncogenic transcription factor NOTCH1 mRNA. Involved in the delivery of target ARE-mRNAs to processing bodies (PBs). In addition to its cytosolic mRNA-decay function, plays a role in the regulation of nuclear mRNA 3'-end processing; modulates mRNA 3'-end maturation efficiency of the DLL4 mRNA through binding with an ARE embedded in a weak noncanonical polyadenylation (poly(A)) signal in endothelial cells. Also involved in the regulation of stress granule (SG) and P-body (PB) formation and fusion. Plays a role in vasculogenesis and endocardial development. Involved in the regulation of keratinocyte proliferation, differentiation and apoptosis. Plays a role in myoblast cell differentiation. The polypeptide is mRNA decay activator protein ZFP36L1 (Mus musculus (Mouse)).